The primary structure comprises 276 residues: Sulfate transport system permease protein CysW (276 aa).

6 consecutive transmembrane segments (helical) span residues 16–36 (LIAL…IAVF), 64–84 (VVMA…AAWV), 99–119 (VLDL…VLLY), 136–156 (IIFS…PFVA), 212–232 (FGAV…LPIF), and 242–262 (TEAA…TLVL). The 208-residue stretch at 60 to 267 (LQLTVVMALI…VTLVLKEILE (208 aa)) folds into the ABC transmembrane type-1 domain.

Belongs to the binding-protein-dependent transport system permease family. CysTW subfamily. As to quaternary structure, the complex is composed of two ATP-binding proteins (CysA), two transmembrane proteins (CysT and CysW) and a solute-binding protein (CysP).

The protein resides in the cell inner membrane. In terms of biological role, part of the ABC transporter complex CysAWTP (TC 3.A.1.6.1) involved in sulfate/thiosulfate import. Probably responsible for the translocation of the substrate across the membrane. This Synechocystis sp. (strain ATCC 27184 / PCC 6803 / Kazusa) protein is Sulfate transport system permease protein CysW (cysW).